A 243-amino-acid polypeptide reads, in one-letter code: Ubiquinone/menaquinone biosynthesis C-methyltransferase UbiE (243 aa).

Residues threonine 69, aspartate 90, and 116–117 (DA) contribute to the S-adenosyl-L-methionine site.

It belongs to the class I-like SAM-binding methyltransferase superfamily. MenG/UbiE family.

It carries out the reaction a 2-demethylmenaquinol + S-adenosyl-L-methionine = a menaquinol + S-adenosyl-L-homocysteine + H(+). The enzyme catalyses a 2-methoxy-6-(all-trans-polyprenyl)benzene-1,4-diol + S-adenosyl-L-methionine = a 5-methoxy-2-methyl-3-(all-trans-polyprenyl)benzene-1,4-diol + S-adenosyl-L-homocysteine + H(+). The protein operates within quinol/quinone metabolism; menaquinone biosynthesis; menaquinol from 1,4-dihydroxy-2-naphthoate: step 2/2. Its pathway is cofactor biosynthesis; ubiquinone biosynthesis. Its function is as follows. Methyltransferase required for the conversion of demethylmenaquinol (DMKH2) to menaquinol (MKH2) and the conversion of 2-polyprenyl-6-methoxy-1,4-benzoquinol (DDMQH2) to 2-polyprenyl-3-methyl-6-methoxy-1,4-benzoquinol (DMQH2). The polypeptide is Ubiquinone/menaquinone biosynthesis C-methyltransferase UbiE (Burkholderia mallei (strain NCTC 10247)).